Here is a 381-residue protein sequence, read N- to C-terminus: Erythronate-4-phosphate dehydrogenase (381 aa).

Residues S45 and T66 each coordinate substrate. NAD(+) is bound by residues D146 and T173. R206 is an active-site residue. Position 230 (D230) interacts with NAD(+). E235 is an active-site residue. The Proton donor role is filled by H252. Position 255 (G255) interacts with NAD(+). Position 256 (Y256) interacts with substrate.

It belongs to the D-isomer specific 2-hydroxyacid dehydrogenase family. PdxB subfamily. Homodimer.

The protein resides in the cytoplasm. The enzyme catalyses 4-phospho-D-erythronate + NAD(+) = (R)-3-hydroxy-2-oxo-4-phosphooxybutanoate + NADH + H(+). It participates in cofactor biosynthesis; pyridoxine 5'-phosphate biosynthesis; pyridoxine 5'-phosphate from D-erythrose 4-phosphate: step 2/5. In terms of biological role, catalyzes the oxidation of erythronate-4-phosphate to 3-hydroxy-2-oxo-4-phosphonooxybutanoate. The chain is Erythronate-4-phosphate dehydrogenase from Hahella chejuensis (strain KCTC 2396).